A 132-amino-acid chain; its full sequence is MSMQDPIADMLTRIRNGQTAHKTILFMPSSKLKVAIARLLQEEGFIKDYKVEGNIKKKPVLKIFLKYFQGKPVIENIQRISRPSLRIYRKKTALPNIMGGMGIAIISTSKGIMTDYTARQAGLGGEIICHVA.

This sequence belongs to the universal ribosomal protein uS8 family. As to quaternary structure, part of the 30S ribosomal subunit. Contacts proteins S5 and S12.

One of the primary rRNA binding proteins, it binds directly to 16S rRNA central domain where it helps coordinate assembly of the platform of the 30S subunit. The protein is Small ribosomal subunit protein uS8 of Baumannia cicadellinicola subsp. Homalodisca coagulata.